A 370-amino-acid chain; its full sequence is Phospho-N-acetylmuramoyl-pentapeptide-transferase (370 aa).

Transmembrane regions (helical) follow at residues L31 to L51, T73 to L93, I98 to M118, L135 to I155, G177 to S197, G209 to S229, V251 to A271, V273 to L293, I298 to V318, and K347 to L367.

Belongs to the glycosyltransferase 4 family. MraY subfamily. It depends on Mg(2+) as a cofactor.

The protein resides in the cell inner membrane. It catalyses the reaction UDP-N-acetyl-alpha-D-muramoyl-L-alanyl-gamma-D-glutamyl-meso-2,6-diaminopimeloyl-D-alanyl-D-alanine + di-trans,octa-cis-undecaprenyl phosphate = di-trans,octa-cis-undecaprenyl diphospho-N-acetyl-alpha-D-muramoyl-L-alanyl-D-glutamyl-meso-2,6-diaminopimeloyl-D-alanyl-D-alanine + UMP. It functions in the pathway cell wall biogenesis; peptidoglycan biosynthesis. In terms of biological role, catalyzes the initial step of the lipid cycle reactions in the biosynthesis of the cell wall peptidoglycan: transfers peptidoglycan precursor phospho-MurNAc-pentapeptide from UDP-MurNAc-pentapeptide onto the lipid carrier undecaprenyl phosphate, yielding undecaprenyl-pyrophosphoryl-MurNAc-pentapeptide, known as lipid I. The sequence is that of Phospho-N-acetylmuramoyl-pentapeptide-transferase from Leptospira borgpetersenii serovar Hardjo-bovis (strain JB197).